A 428-amino-acid polypeptide reads, in one-letter code: Histidinol dehydrogenase (428 aa).

The NAD(+) site is built by Y126, Q188, and N211. Residues S234, Q256, and H259 each contribute to the substrate site. Q256 and H259 together coordinate Zn(2+). Residues E324 and H325 each act as proton acceptor in the active site. Residues H325, D358, E412, and H417 each contribute to the substrate site. D358 is a binding site for Zn(2+). Residue H417 participates in Zn(2+) binding.

Belongs to the histidinol dehydrogenase family. The cofactor is Zn(2+).

The catalysed reaction is L-histidinol + 2 NAD(+) + H2O = L-histidine + 2 NADH + 3 H(+). It participates in amino-acid biosynthesis; L-histidine biosynthesis; L-histidine from 5-phospho-alpha-D-ribose 1-diphosphate: step 9/9. Its function is as follows. Catalyzes the sequential NAD-dependent oxidations of L-histidinol to L-histidinaldehyde and then to L-histidine. This chain is Histidinol dehydrogenase, found in Chlorobium chlorochromatii (strain CaD3).